The chain runs to 156 residues: Large ribosomal subunit protein uL22 (156 aa).

Belongs to the universal ribosomal protein uL22 family. Part of the 50S ribosomal subunit.

In terms of biological role, this protein binds specifically to 23S rRNA. It makes multiple contacts with different domains of the 23S rRNA in the assembled 50S subunit and ribosome. Its function is as follows. The globular domain of the protein is located near the polypeptide exit tunnel on the outside of the subunit, while an extended beta-hairpin is found that lines the wall of the exit tunnel in the center of the 70S ribosome. The polypeptide is Large ribosomal subunit protein uL22 (Sulfolobus acidocaldarius (strain ATCC 33909 / DSM 639 / JCM 8929 / NBRC 15157 / NCIMB 11770)).